Consider the following 503-residue polypeptide: Maturase K (503 aa).

This sequence belongs to the intron maturase 2 family. MatK subfamily.

Its subcellular location is the plastid. It localises to the chloroplast. Its function is as follows. Usually encoded in the trnK tRNA gene intron. Probably assists in splicing its own and other chloroplast group II introns. The chain is Maturase K from Diospyros kaki (Kaki persimmon).